A 415-amino-acid chain; its full sequence is Serine--tRNA ligase (415 aa).

231 to 233 is a binding site for L-serine; the sequence is TAE. 262–264 serves as a coordination point for ATP; sequence RSE. Glu285 is a binding site for L-serine. An ATP-binding site is contributed by 349 to 352; the sequence is EISS. Ser383 lines the L-serine pocket.

This sequence belongs to the class-II aminoacyl-tRNA synthetase family. Type-1 seryl-tRNA synthetase subfamily. In terms of assembly, homodimer. The tRNA molecule binds across the dimer.

The protein localises to the cytoplasm. It catalyses the reaction tRNA(Ser) + L-serine + ATP = L-seryl-tRNA(Ser) + AMP + diphosphate + H(+). The enzyme catalyses tRNA(Sec) + L-serine + ATP = L-seryl-tRNA(Sec) + AMP + diphosphate + H(+). Its pathway is aminoacyl-tRNA biosynthesis; selenocysteinyl-tRNA(Sec) biosynthesis; L-seryl-tRNA(Sec) from L-serine and tRNA(Sec): step 1/1. Functionally, catalyzes the attachment of serine to tRNA(Ser). Is also able to aminoacylate tRNA(Sec) with serine, to form the misacylated tRNA L-seryl-tRNA(Sec), which will be further converted into selenocysteinyl-tRNA(Sec). The protein is Serine--tRNA ligase of Helicobacter pylori (strain Shi470).